The primary structure comprises 193 residues: PBAN-type neuropeptides (193 aa).

Residues Met1 to Ala19 form the signal peptide. Ile46 bears the Isoleucine amide mark. Leu102 and Leu122 each carry leucine amide. Residues Arg124–Leu158 are disordered. Residues Glu138–Thr151 show a composition bias toward basic and acidic residues. Residues Leu158 and Leu168 each carry the leucine amide modification. Residues Ser186 to Thr193 constitute a propeptide that is removed on maturation.

The protein belongs to the pyrokinin family. Expressed in the mandibular, maxillary and labial neuromeres of the male and female brain-subesophageal ganglions, in the corpora cardiaca and all around the corpora allata, and at a lower level in the brain near the calyx and pedunculus of the mushroom body (at protein level). Expressed in larvae and adult of both sexes (at protein level). As to expression, expressed in corpora cardiaca (CC), corpora allata (CA) and gnathal ganglion (GNG) (at protein level). Expression in CC and CA detected in most animals, in GNG in some (at protein level). In terms of tissue distribution, expression not detected in CC, CA, AL or GNG (at protein level). Expressed in corpora cardiaca (CC), corpora allata (CA), antennal lobe (AL) and gnathal ganglion (GNG) (at protein level). Expression in CC, CA and GNG detected in most animals, expression in AL detected in few (at protein level). As to expression, expressed in corpora cardiaca (CC), corpora allata (CA), antennal lobe (AL) and gnathal ganglion (GNG) (at protein level). Expression in CC, CA and GNG detected in all animals, expression in AL detected in some (at protein level). In terms of tissue distribution, expressed in corpora cardiaca (CC), corpora allata (CA), antennal lobe (AL) and gnathal ganglion (GNG) (at protein level). Expression in CC, CA and GNG detected in most animals, expression in AL detected in some animals (at protein level).

Its subcellular location is the secreted. In terms of biological role, a hormone that controls sex pheromone production in female moths and pheromone responsiveness in male. This is PBAN-type neuropeptides from Agrotis ipsilon (Black cutworm moth).